Reading from the N-terminus, the 319-residue chain is Acetyl-coenzyme A carboxylase carboxyl transferase subunit alpha (319 aa).

The region spanning 35–296 (NIDEEVHRLR…KAQLLADLAD (262 aa)) is the CoA carboxyltransferase C-terminal domain.

Belongs to the AccA family. Acetyl-CoA carboxylase is a heterohexamer composed of biotin carboxyl carrier protein (AccB), biotin carboxylase (AccC) and two subunits each of ACCase subunit alpha (AccA) and ACCase subunit beta (AccD).

It localises to the cytoplasm. The enzyme catalyses N(6)-carboxybiotinyl-L-lysyl-[protein] + acetyl-CoA = N(6)-biotinyl-L-lysyl-[protein] + malonyl-CoA. It participates in lipid metabolism; malonyl-CoA biosynthesis; malonyl-CoA from acetyl-CoA: step 1/1. Component of the acetyl coenzyme A carboxylase (ACC) complex. First, biotin carboxylase catalyzes the carboxylation of biotin on its carrier protein (BCCP) and then the CO(2) group is transferred by the carboxyltransferase to acetyl-CoA to form malonyl-CoA. This chain is Acetyl-coenzyme A carboxylase carboxyl transferase subunit alpha, found in Escherichia coli O127:H6 (strain E2348/69 / EPEC).